Reading from the N-terminus, the 187-residue chain is Guanylate kinase (187 aa).

An N-acetylserine modification is found at Ser-2. In terms of domain architecture, Guanylate kinase-like spans 2–184 (SRPIVISGPS…AYKELKDFIF (183 aa)). 9–16 (GPSGTGKS) is an ATP binding site. GMP-binding positions include Ser-35, 39–42 (RTPR), Tyr-51, Glu-70, 79–81 (YGS), and Asp-101. A Phosphoserine modification is found at Ser-149. Tyr-157 is modified (phosphotyrosine).

This sequence belongs to the guanylate kinase family. Monomer.

It carries out the reaction GMP + ATP = GDP + ADP. Functionally, catalyzes the reversible transfer of the terminal phosphoryl group of ATP to the acceptor molecule GMP. Essential for recycling GMP and indirectly, cGMP. This chain is Guanylate kinase (GUK1), found in Saccharomyces cerevisiae (strain ATCC 204508 / S288c) (Baker's yeast).